Reading from the N-terminus, the 148-residue chain is Large ribosomal subunit protein bL9 (148 aa).

The protein belongs to the bacterial ribosomal protein bL9 family.

Binds to the 23S rRNA. The protein is Large ribosomal subunit protein bL9 of Azotobacter vinelandii (strain DJ / ATCC BAA-1303).